A 494-amino-acid polypeptide reads, in one-letter code: Alpha-amylase-related protein (494 aa).

The first 20 residues, 1 to 20 (MFKFASAVILCLVAASSTQA), serve as a signal peptide directing secretion. A Pyrrolidone carboxylic acid modification is found at glutamine 21. An intrachain disulfide couples cysteine 48 to cysteine 104. 3 residues coordinate Ca(2+): asparagine 118, glutamine 169, and aspartate 178. Residues cysteine 157 and cysteine 171 are joined by a disulfide bond. Arginine 206 lines the chloride pocket. Residue aspartate 208 is the Nucleophile of the active site. Ca(2+) is bound at residue histidine 212. Residue glutamate 245 is the Proton donor of the active site. Chloride-binding residues include asparagine 308 and arginine 343. Cystine bridges form between cysteine 376–cysteine 382, cysteine 418–cysteine 441, and cysteine 448–cysteine 460.

Belongs to the glycosyl hydrolase 13 family. In terms of assembly, monomer. The cofactor is Ca(2+). Chloride is required as a cofactor.

It is found in the secreted. The enzyme catalyses Endohydrolysis of (1-&gt;4)-alpha-D-glucosidic linkages in polysaccharides containing three or more (1-&gt;4)-alpha-linked D-glucose units.. The sequence is that of Alpha-amylase-related protein (Amyrel) from Drosophila ercepeae (Fruit fly).